A 172-amino-acid polypeptide reads, in one-letter code: Large ribosomal subunit protein uL10 (172 aa).

The protein belongs to the universal ribosomal protein uL10 family. As to quaternary structure, part of the ribosomal stalk of the 50S ribosomal subunit. The N-terminus interacts with L11 and the large rRNA to form the base of the stalk. The C-terminus forms an elongated spine to which L12 dimers bind in a sequential fashion forming a multimeric L10(L12)X complex.

In terms of biological role, forms part of the ribosomal stalk, playing a central role in the interaction of the ribosome with GTP-bound translation factors. The sequence is that of Large ribosomal subunit protein uL10 from Syntrophotalea carbinolica (strain DSM 2380 / NBRC 103641 / GraBd1) (Pelobacter carbinolicus).